The primary structure comprises 735 residues: Disintegrin and metalloproteinase domain-containing protein 2 (735 aa).

The signal sequence occupies residues 1 to 18 (MWLILLLLSGLSELGGLS). A propeptide spanning residues 19-180 (QSQTEGTREK…YKIRSIKPQR (162 aa)) is cleaved from the precursor. Residues 19–686 (QSQTEGTREK…ASAYRSKSPR (668 aa)) lie on the Extracellular side of the membrane. 3 N-linked (GlcNAc...) asparagine glycosylation sites follow: Asn128, Asn226, and Asn279. A Peptidase M12B domain is found at 184–381 (HYLEIHIVVE…QSSHCLQNQP (198 aa)). 4 disulfides stabilise this stretch: Cys293-Cys376, Cys335-Cys360, Cys337-Cys342, and Cys449-Cys469. Residues Asn359, Asn463, Asn489, Asn569, and Asn585 are each glycosylated (N-linked (GlcNAc...) asparagine). One can recognise a Disintegrin domain in the interval 389–476 (MAVCGNGEVE…EVCEDFFVQN (88 aa)). An EGF-like domain is found at 615-648 (LGYDCNLEKCNHHGVCNNKKNCHCDPTYLPPDCK). Disulfide bonds link Cys619–Cys630, Cys624–Cys636, and Cys638–Cys647. Residues 687 to 707 (WPFFLIIPFYVVILVLIGMLV) traverse the membrane as a helical segment. The Cytoplasmic segment spans residues 708–735 (KVYSQRMKWRMDDFSSEEQFESESESKD). Position 729 is a phosphoserine (Ser729).

Heterodimer with ADAM1/fertilin subunit alpha. In terms of processing, the signal and the metalloprotease domain are cleaved during the epididymal maturation of the spermatozoa. Expressed in the testis and testicular sperm (at protein level).

The protein localises to the membrane. Functionally, sperm surface membrane protein that may be involved in sperm-egg plasma membrane adhesion and fusion during fertilization. Could have a direct role in sperm-zona binding or migration of sperm from the uterus into the oviduct. Interactions with egg membrane could be mediated via binding between its disintegrin-like domain to one or more integrins receptors on the egg. This is a non catalytic metalloprotease-like protein. In Mus musculus (Mouse), this protein is Disintegrin and metalloproteinase domain-containing protein 2.